The sequence spans 434 residues: Tol-Pal system protein TolB (434 aa).

Positions methionine 1–alanine 28 are cleaved as a signal peptide.

It belongs to the TolB family. The Tol-Pal system is composed of five core proteins: the inner membrane proteins TolA, TolQ and TolR, the periplasmic protein TolB and the outer membrane protein Pal. They form a network linking the inner and outer membranes and the peptidoglycan layer.

The protein resides in the periplasm. Its function is as follows. Part of the Tol-Pal system, which plays a role in outer membrane invagination during cell division and is important for maintaining outer membrane integrity. In Alcanivorax borkumensis (strain ATCC 700651 / DSM 11573 / NCIMB 13689 / SK2), this protein is Tol-Pal system protein TolB.